Here is a 546-residue protein sequence, read N- to C-terminus: Thermolysin (546 aa).

The first 25 residues, 1–25 (MDKRAMLGAIGLAFGLMAWPFGASA), serve as a signal peptide directing secretion. A propeptide spans 26–228 (KEKSMVWNEQ…EAKPGGGQPV (203 aa)) (activation peptide). 4 residues coordinate Ca(2+): Asp287, Asp289, Gln291, and Asp368. His372 is a binding site for Zn(2+). Glu373 is a catalytic residue. Zn(2+)-binding residues include His376 and Glu396. Positions 413, 415, 417, 420, 423, 424, 427, and 430 each coordinate Ca(2+). The active-site Proton donor is the His461.

It belongs to the peptidase M4 family. Requires Ca(2+) as cofactor. Zn(2+) serves as cofactor.

It is found in the secreted. The enzyme catalyses Preferential cleavage: Xaa-|-Leu &gt; Xaa-|-Phe.. Functionally, extracellular zinc metalloprotease. Has collagenase activity. The polypeptide is Thermolysin (npr) (Bacillus sp. (strain EA1)).